We begin with the raw amino-acid sequence, 47 residues long: Conotoxin Bu10 (47 aa).

The propeptide occupies 1–22 (DSRGTQLHRALRKATILSVSAR). 3 disulfides stabilise this stretch: Cys-23-Cys-37, Cys-30-Cys-41, and Cys-36-Cys-46. Cysteine amide is present on Cys-46.

The protein belongs to the conotoxin O1 superfamily. Expressed by the venom duct.

It is found in the secreted. The protein is Conotoxin Bu10 of Conus bullatus (Bubble cone).